Consider the following 384-residue polypeptide: MVMKKKRIIAMILAGGQGTRLKELTEDLAKPAVAFGGKYRIIDFTLTNCSNSGIDTVGVLTQYEPRILNNHIGRGSPWDLDRMDGGVTVLQPHTRKNDEKGWYKGTANAIYQNIKFIEEYDPEYVLILSGDHIYKMNYDKMLQFHIQKDADATIGVFKVPLVDAPSFGIMNTKDDMSIYEFEEKPKEPKSDLASMGIYIFNWKLLKKYLDEDEKDPNSSNDFGKNIIPNMLNDGKKMFAYPFKGYWRDVGTIQSFWDAHMDLLSEDNELDLFDKSWRVNTRQGIYTPSYFTKESKIKNTLIDKGCIVEGEIEHSVIFSGVKIGKNSKIIDSIIMADTEIGDNVTIQKAIIANDVKIVDNIVIGDGKKIAVVGEKKIIDSQSLVK.

Alpha-D-glucose 1-phosphate is bound by residues Tyr103, Gly168, 183-184 (EK), and Ser194.

The protein belongs to the bacterial/plant glucose-1-phosphate adenylyltransferase family. In terms of assembly, homotetramer.

The enzyme catalyses alpha-D-glucose 1-phosphate + ATP + H(+) = ADP-alpha-D-glucose + diphosphate. Its pathway is glycan biosynthesis; glycogen biosynthesis. In terms of biological role, involved in the biosynthesis of ADP-glucose, a building block required for the elongation reactions to produce glycogen. Catalyzes the reaction between ATP and alpha-D-glucose 1-phosphate (G1P) to produce pyrophosphate and ADP-Glc. The polypeptide is Glucose-1-phosphate adenylyltransferase (Fusobacterium nucleatum subsp. nucleatum (strain ATCC 25586 / DSM 15643 / BCRC 10681 / CIP 101130 / JCM 8532 / KCTC 2640 / LMG 13131 / VPI 4355)).